We begin with the raw amino-acid sequence, 147 residues long: D-aminoacyl-tRNA deacylase (147 aa).

Positions 136–137 (GP) match the Gly-cisPro motif, important for rejection of L-amino acids motif.

It belongs to the DTD family. In terms of assembly, homodimer.

The protein localises to the cytoplasm. It catalyses the reaction glycyl-tRNA(Ala) + H2O = tRNA(Ala) + glycine + H(+). It carries out the reaction a D-aminoacyl-tRNA + H2O = a tRNA + a D-alpha-amino acid + H(+). Functionally, an aminoacyl-tRNA editing enzyme that deacylates mischarged D-aminoacyl-tRNAs. Also deacylates mischarged glycyl-tRNA(Ala), protecting cells against glycine mischarging by AlaRS. Acts via tRNA-based rather than protein-based catalysis; rejects L-amino acids rather than detecting D-amino acids in the active site. By recycling D-aminoacyl-tRNA to D-amino acids and free tRNA molecules, this enzyme counteracts the toxicity associated with the formation of D-aminoacyl-tRNA entities in vivo and helps enforce protein L-homochirality. The protein is D-aminoacyl-tRNA deacylase of Streptococcus sanguinis (strain SK36).